The sequence spans 213 residues: Orotate phosphoribosyltransferase (213 aa).

A 5-phospho-alpha-D-ribose 1-diphosphate-binding site is contributed by Lys-26. Residue 34 to 35 (FF) coordinates orotate. Residues 72–73 (YK), Arg-98, Lys-99, Lys-102, and 123–131 (DDVISAGTS) contribute to the 5-phospho-alpha-D-ribose 1-diphosphate site. Orotate contacts are provided by Ser-127 and Arg-155.

Belongs to the purine/pyrimidine phosphoribosyltransferase family. PyrE subfamily. Homodimer. Mg(2+) serves as cofactor.

The catalysed reaction is orotidine 5'-phosphate + diphosphate = orotate + 5-phospho-alpha-D-ribose 1-diphosphate. It functions in the pathway pyrimidine metabolism; UMP biosynthesis via de novo pathway; UMP from orotate: step 1/2. Catalyzes the transfer of a ribosyl phosphate group from 5-phosphoribose 1-diphosphate to orotate, leading to the formation of orotidine monophosphate (OMP). In Neisseria gonorrhoeae (strain NCCP11945), this protein is Orotate phosphoribosyltransferase.